Consider the following 443-residue polypeptide: Ribulose bisphosphate carboxylase large chain (443 aa).

Substrate-binding residues include N89 and T139. Catalysis depends on K141, which acts as the Proton acceptor. K143 serves as a coordination point for substrate. 3 residues coordinate Mg(2+): K167, D169, and E170. K167 is modified (N6-carboxylysine). H260 functions as the Proton acceptor in the catalytic mechanism. R261, H293, and S345 together coordinate substrate.

This sequence belongs to the RuBisCO large chain family. Type I subfamily. As to quaternary structure, heterohexadecamer of 8 large chains and 8 small chains; disulfide-linked. The disulfide link is formed within the large subunit homodimers. Requires Mg(2+) as cofactor. The disulfide bond which can form in the large chain dimeric partners within the hexadecamer appears to be associated with oxidative stress and protein turnover.

It localises to the plastid. Its subcellular location is the chloroplast. It catalyses the reaction 2 (2R)-3-phosphoglycerate + 2 H(+) = D-ribulose 1,5-bisphosphate + CO2 + H2O. It carries out the reaction D-ribulose 1,5-bisphosphate + O2 = 2-phosphoglycolate + (2R)-3-phosphoglycerate + 2 H(+). In terms of biological role, ruBisCO catalyzes two reactions: the carboxylation of D-ribulose 1,5-bisphosphate, the primary event in carbon dioxide fixation, as well as the oxidative fragmentation of the pentose substrate in the photorespiration process. Both reactions occur simultaneously and in competition at the same active site. This chain is Ribulose bisphosphate carboxylase large chain, found in Antirrhinum majus (Garden snapdragon).